Consider the following 434-residue polypeptide: Glutamyl-tRNA reductase (434 aa).

Substrate-binding positions include Thr-49–Arg-52, Ser-107, Glu-112–Gln-114, and Gln-118. Cys-50 functions as the Nucleophile in the catalytic mechanism. Gly-187–Val-192 contributes to the NADP(+) binding site.

Belongs to the glutamyl-tRNA reductase family. As to quaternary structure, homodimer.

It catalyses the reaction (S)-4-amino-5-oxopentanoate + tRNA(Glu) + NADP(+) = L-glutamyl-tRNA(Glu) + NADPH + H(+). The protein operates within porphyrin-containing compound metabolism; protoporphyrin-IX biosynthesis; 5-aminolevulinate from L-glutamyl-tRNA(Glu): step 1/2. In terms of biological role, catalyzes the NADPH-dependent reduction of glutamyl-tRNA(Glu) to glutamate 1-semialdehyde (GSA). The protein is Glutamyl-tRNA reductase of Hydrogenovibrio crunogenus (strain DSM 25203 / XCL-2) (Thiomicrospira crunogena).